The sequence spans 204 residues: Threonylcarbamoyl-AMP synthase (204 aa).

Residues 10–204 (ADELDLVANY…KDLLAGHILR (195 aa)) form the YrdC-like domain.

The protein belongs to the SUA5 family. TsaC subfamily.

Its subcellular location is the cytoplasm. The catalysed reaction is L-threonine + hydrogencarbonate + ATP = L-threonylcarbamoyladenylate + diphosphate + H2O. Required for the formation of a threonylcarbamoyl group on adenosine at position 37 (t(6)A37) in tRNAs that read codons beginning with adenine. Catalyzes the conversion of L-threonine, HCO(3)(-)/CO(2) and ATP to give threonylcarbamoyl-AMP (TC-AMP) as the acyladenylate intermediate, with the release of diphosphate. The chain is Threonylcarbamoyl-AMP synthase from Moraxella catarrhalis (strain BBH18).